Consider the following 267-residue polypeptide: GTP cyclohydrolase FolE2 (267 aa).

The protein belongs to the GTP cyclohydrolase IV family.

The enzyme catalyses GTP + H2O = 7,8-dihydroneopterin 3'-triphosphate + formate + H(+). Its pathway is cofactor biosynthesis; 7,8-dihydroneopterin triphosphate biosynthesis; 7,8-dihydroneopterin triphosphate from GTP: step 1/1. Functionally, converts GTP to 7,8-dihydroneopterin triphosphate. The protein is GTP cyclohydrolase FolE2 of Nitrosomonas eutropha (strain DSM 101675 / C91 / Nm57).